A 269-amino-acid polypeptide reads, in one-letter code: MATH domain and coiled-coil domain-containing protein At2g01790 (269 aa).

The MATH domain maps to 6–134 (AVKKLWVINN…NGEVDIVAEV (129 aa)). The stretch at 228 to 269 (KLDWLEKKLKETGKSRLQEIEEDLKDLKVKCADMDALLEFLR) forms a coiled coil.

In Arabidopsis thaliana (Mouse-ear cress), this protein is MATH domain and coiled-coil domain-containing protein At2g01790.